The primary structure comprises 341 residues: Transcription factor JunD (341 aa).

The segment at 21–49 (VAGAAGAPGGGGFAPPGRAFPGAPPTSSM) is disordered. The Menin-binding motif (MBM) signature appears at 35 to 47 (PPGRAFPGAPPTS). Residues 51 to 60 (KKDALTLSLA) carry the MAP kinase docking motif; essential for its phosphorylation motif. Residues 65-85 (AGLKPGSATAPSALRPDGAPD) are disordered. S90 carries the post-translational modification Phosphoserine. S100 is subject to Phosphoserine; by MAPK8. T117 is subject to Phosphothreonine. The disordered stretch occupies residues 155–176 (AATAATSGAPAPPAPADLAATP). S245, S249, and S253 each carry phosphoserine. Residues 262 to 289 (RIKAERKRLRNRIAASKCRKRKLERISR) are basic motif. One can recognise a bZIP domain in the interval 262–325 (RIKAERKRLR…AQLKQKVLSH (64 aa)). Residues 290–318 (LEEKVKTLKSQNTELASTASLLREQVAQL) are leucine-zipper.

Belongs to the bZIP family. Jun subfamily. In terms of assembly, heterodimer; binds DNA as a heterodimer. Component of an AP-1 transcription factor complex composed of JUN-FOS heterodimers. As part of the AP-1 transcription factor complex, forms heterodimers with FOS proteins, thereby binding to the AP-1 consensus sequence and stimulating transcription. Forms heterodimers with FOSB; thereby binding to the AP-1 consensus sequence. Interacts (via MBM motif) with MEN1; this interaction represses transcriptional activation. Interacts with MAPK10; this interaction is inhibited in the presence of MEN1. Phosphorylated by MAP kinases MAPK8 and MAPK10; phosphorylation is inhibited in the presence of MEN1.

The protein resides in the nucleus. In terms of biological role, transcription factor binding AP-1 sites. Heterodimerizes with proteins of the FOS family to form an AP-1 transcription factor complex, thereby enhancing their DNA binding activity to an AP-1 consensus sequence 3'-TGA[GC]TCA-5' and enhancing their transcriptional activity. This Rattus norvegicus (Rat) protein is Transcription factor JunD (Jund).